A 431-amino-acid polypeptide reads, in one-letter code: Serine hydroxymethyltransferase 2 (431 aa).

Residues leucine 131 and 135 to 137 (GHL) each bind (6S)-5,6,7,8-tetrahydrofolate. Position 240 is an N6-(pyridoxal phosphate)lysine (lysine 240). Glutamate 256 serves as a coordination point for (6S)-5,6,7,8-tetrahydrofolate.

The protein belongs to the SHMT family. In terms of assembly, homodimer. The cofactor is pyridoxal 5'-phosphate.

The protein localises to the cytoplasm. The enzyme catalyses (6R)-5,10-methylene-5,6,7,8-tetrahydrofolate + glycine + H2O = (6S)-5,6,7,8-tetrahydrofolate + L-serine. Its pathway is one-carbon metabolism; tetrahydrofolate interconversion. The protein operates within amino-acid biosynthesis; glycine biosynthesis; glycine from L-serine: step 1/1. Catalyzes the reversible interconversion of serine and glycine with tetrahydrofolate (THF) serving as the one-carbon carrier. This reaction serves as the major source of one-carbon groups required for the biosynthesis of purines, thymidylate, methionine, and other important biomolecules. Also exhibits THF-independent aldolase activity toward beta-hydroxyamino acids, producing glycine and aldehydes, via a retro-aldol mechanism. The chain is Serine hydroxymethyltransferase 2 from Vibrio vulnificus (strain CMCP6).